The primary structure comprises 984 residues: Putative formate dehydrogenase SH0748 (984 aa).

Residues 3–79 form the 2Fe-2S ferredoxin-type domain; the sequence is EHLIVTLDGT…PMTVNTQNND (77 aa). 4 residues coordinate [2Fe-2S] cluster: cysteine 37, cysteine 48, cysteine 51, and cysteine 63. The 4Fe-4S His(Cys)3-ligated-type domain maps to 79 to 119; it reads DVKASQKEALDRILEKHMLYCTVCDYNNGDCEIHNAMDAWG. [4Fe-4S] cluster-binding residues include histidine 95, cysteine 99, cysteine 102, cysteine 109, cysteine 147, cysteine 150, cysteine 153, cysteine 157, cysteine 190, cysteine 193, cysteine 196, cysteine 200, cysteine 264, cysteine 267, cysteine 271, and cysteine 299. 4Fe-4S ferredoxin-type domains lie at 138 to 165 and 181 to 211; these read PFYRYDPDQCILCGRCVEACQDIEVNET and NDVPINESSCVSCGQCATVCPCNAMMEVNME. The interval 252 to 984 is formate dehydrogenase; the sequence is MRKERIKKTK…YVFPGNVVDK (733 aa). The 4Fe-4S Mo/W bis-MGD-type domain maps to 257 to 313; sequence IKKTKTVCTYCGVGCSFDVWTKDREVLKVQPSHDSPANKIATCVKGKFSWGHINSDQ.

The protein in the C-terminal section; belongs to the prokaryotic molybdopterin-containing oxidoreductase family. Requires [2Fe-2S] cluster as cofactor. It depends on [4Fe-4S] cluster as a cofactor. Mo-bis(molybdopterin guanine dinucleotide) serves as cofactor.

It carries out the reaction formate + NAD(+) = CO2 + NADH. In Staphylococcus haemolyticus (strain JCSC1435), this protein is Putative formate dehydrogenase SH0748.